The primary structure comprises 603 residues: MDTLFRLVSLHHHHHHQHAASPSPPDQPHKSYPSSRGSTSSPSSHHTHNHTYYHHSHSHYNNNSNTNYYYQGGGGGGGGYYYAEEQQPAAYLEECGNGHQFYMDEDFSSSSSSRQFHSGTGAPSSAPVPPPPSATTSSAGGHGLFEAADFSFPQVDISLDFGGSPAVPSSSGAGAGAGAAPSSSGRWAAQLLMECARAVAGRDSQRVQQLMWMLNELASPYGDVDQKLASYFLQGLFARLTTSGPRTLRTLATASDRNASFDSTRRTALKFQELSPWTPFGHVAANGAILESFLEAAAAGAAASSSSSSSSSTPPTRLHILDLSNTFCTQWPTLLEALATRSSDDTPHLSITTVVPTAAPSAAAQRVMREIGQRLEKFARLMGVPFSFRAVHHSGDLADLDLAALDLREGGATAALAVNCVNALRGVARGRDAFVASLRRLEPRVVTVVEEEADLAAPEADASSEADTDAAFVKVFGEGLRFFSAYMDSLEESFPKTSNERLSLERAVGRAIVDLVSCPASQSAERRETAASWARRMRSAGFSPAAFSEDVADDVRSLLRRYKEGWSMRDAGGATDDAAGAAAAGAFLAWKEQPVVWASAWKP.

Disordered stretches follow at residues 11 to 58 and 106 to 140; these read HHHH…HSHS and DFSSSSSSRQFHSGTGAPSSAPVPPPPSATTSSAG. Residues 31–44 are compositionally biased toward low complexity; that stretch reads SYPSSRGSTSSPSS. Positions 45–58 are enriched in basic residues; it reads HHTHNHTYYHHSHS. Residues 108–125 are compositionally biased toward low complexity; sequence SSSSSSRQFHSGTGAPSS. The region spanning 179–602 is the GRAS domain; the sequence is AAPSSSGRWA…QPVVWASAWK (424 aa). The interval 186 to 249 is leucine repeat I (LRI); sequence RWAAQLLMEC…LTTSGPRTLR (64 aa). Residues 268–354 are VHIID; that stretch reads ALKFQELSPW…DTPHLSITTV (87 aa). Residues 318-322 carry the VHIID motif; the sequence is LHILD. The tract at residues 370–406 is leucine repeat II (LRII); the sequence is EIGQRLEKFARLMGVPFSFRAVHHSGDLADLDLAALD. Residues 416–514 form a PFYRE region; it reads LAVNCVNALR…ERAVGRAIVD (99 aa). Positions 517 to 602 are SAW; sequence SCPASQSAER…QPVVWASAWK (86 aa).

The protein belongs to the GRAS family. Does not interact with SCR1.

The protein localises to the nucleus. Functionally, putative transcription factor involved in asymmetric cell division. The sequence is that of Protein SHORT-ROOT 2 (SHR2) from Oryza sativa subsp. japonica (Rice).